We begin with the raw amino-acid sequence, 163 residues long: Large ribosomal subunit protein bL17 (163 aa).

The span at 123 to 135 shows a compositional bias: low complexity; that stretch reads AEASRATRASASK. The segment at 123 to 163 is disordered; that stretch reads AEASRATRASASKKAAEEAETEEVVEAPAEETATEEAAEEK. Positions 140-163 are enriched in acidic residues; the sequence is EAETEEVVEAPAEETATEEAAEEK.

Belongs to the bacterial ribosomal protein bL17 family. Part of the 50S ribosomal subunit. Contacts protein L32.

In Corynebacterium glutamicum (strain ATCC 13032 / DSM 20300 / JCM 1318 / BCRC 11384 / CCUG 27702 / LMG 3730 / NBRC 12168 / NCIMB 10025 / NRRL B-2784 / 534), this protein is Large ribosomal subunit protein bL17.